Here is a 546-residue protein sequence, read N- to C-terminus: Chaperonin GroEL (546 aa).

ATP is bound by residues 29-32, Lys-50, 86-90, Gly-414, and Asp-492; these read TMGP and DGTTT.

It belongs to the chaperonin (HSP60) family. As to quaternary structure, forms a cylinder of 14 subunits composed of two heptameric rings stacked back-to-back. Interacts with the co-chaperonin GroES.

The protein resides in the cytoplasm. It carries out the reaction ATP + H2O + a folded polypeptide = ADP + phosphate + an unfolded polypeptide.. Its function is as follows. Together with its co-chaperonin GroES, plays an essential role in assisting protein folding. The GroEL-GroES system forms a nano-cage that allows encapsulation of the non-native substrate proteins and provides a physical environment optimized to promote and accelerate protein folding. In Helicobacter pylori (strain G27), this protein is Chaperonin GroEL.